A 393-amino-acid polypeptide reads, in one-letter code: NAD(P)H-quinone oxidoreductase subunit H, chloroplastic (393 aa).

This sequence belongs to the complex I 49 kDa subunit family. As to quaternary structure, NDH is composed of at least 16 different subunits, 5 of which are encoded in the nucleus.

Its subcellular location is the plastid. The protein localises to the chloroplast thylakoid membrane. The catalysed reaction is a plastoquinone + NADH + (n+1) H(+)(in) = a plastoquinol + NAD(+) + n H(+)(out). The enzyme catalyses a plastoquinone + NADPH + (n+1) H(+)(in) = a plastoquinol + NADP(+) + n H(+)(out). In terms of biological role, NDH shuttles electrons from NAD(P)H:plastoquinone, via FMN and iron-sulfur (Fe-S) centers, to quinones in the photosynthetic chain and possibly in a chloroplast respiratory chain. The immediate electron acceptor for the enzyme in this species is believed to be plastoquinone. Couples the redox reaction to proton translocation, and thus conserves the redox energy in a proton gradient. This is NAD(P)H-quinone oxidoreductase subunit H, chloroplastic from Platanus occidentalis (Sycamore).